The primary structure comprises 188 residues: dTTP/UTP pyrophosphatase (188 aa).

Asp67 functions as the Proton acceptor in the catalytic mechanism.

The protein belongs to the Maf family. YhdE subfamily. A divalent metal cation serves as cofactor.

It localises to the cytoplasm. The catalysed reaction is dTTP + H2O = dTMP + diphosphate + H(+). The enzyme catalyses UTP + H2O = UMP + diphosphate + H(+). Functionally, nucleoside triphosphate pyrophosphatase that hydrolyzes dTTP and UTP. May have a dual role in cell division arrest and in preventing the incorporation of modified nucleotides into cellular nucleic acids. The sequence is that of dTTP/UTP pyrophosphatase from Roseobacter denitrificans (strain ATCC 33942 / OCh 114) (Erythrobacter sp. (strain OCh 114)).